The following is a 159-amino-acid chain: ATP synthase subunit b', chloroplastic (159 aa).

The chain crosses the membrane as a helical span at residues 30 to 47 (LMALQFLALTIILNLIYY).

Belongs to the ATPase B chain family. F-type ATPases have 2 components, F(1) - the catalytic core - and F(0) - the membrane proton channel. F(1) has five subunits: alpha(3), beta(3), gamma(1), delta(1), epsilon(1). F(0) has four main subunits: a(1), b(1), b'(1) and c(10-14). The alpha and beta chains form an alternating ring which encloses part of the gamma chain. F(1) is attached to F(0) by a central stalk formed by the gamma and epsilon chains, while a peripheral stalk is formed by the delta, b and b' chains.

It is found in the plastid. The protein resides in the chloroplast thylakoid membrane. Functionally, f(1)F(0) ATP synthase produces ATP from ADP in the presence of a proton or sodium gradient. F-type ATPases consist of two structural domains, F(1) containing the extramembraneous catalytic core and F(0) containing the membrane proton channel, linked together by a central stalk and a peripheral stalk. During catalysis, ATP synthesis in the catalytic domain of F(1) is coupled via a rotary mechanism of the central stalk subunits to proton translocation. Component of the F(0) channel, it forms part of the peripheral stalk, linking F(1) to F(0). The b'-subunit is a diverged and duplicated form of b found in plants and photosynthetic bacteria. This Antithamnion sp. (Red alga) protein is ATP synthase subunit b', chloroplastic.